A 511-amino-acid chain; its full sequence is GMP synthase [glutamine-hydrolyzing] (511 aa).

Residues 5 to 195 form the Glutamine amidotransferase type-1 domain; the sequence is AILVLDFGSQ…VFKICQAQIN (191 aa). The active-site Nucleophile is the cysteine 82. Residues histidine 169 and glutamate 171 contribute to the active site. In terms of domain architecture, GMPS ATP-PPase spans 196 to 386; it reads WSLEGNLETI…LGIKKESLYR (191 aa). Position 223–229 (223–229) interacts with ATP; that stretch reads SGGTDSL.

As to quaternary structure, homodimer.

It catalyses the reaction XMP + L-glutamine + ATP + H2O = GMP + L-glutamate + AMP + diphosphate + 2 H(+). Its pathway is purine metabolism; GMP biosynthesis; GMP from XMP (L-Gln route): step 1/1. Its function is as follows. Catalyzes the synthesis of GMP from XMP. The polypeptide is GMP synthase [glutamine-hydrolyzing] (guaA) (Borreliella burgdorferi (strain N40) (Borrelia burgdorferi)).